Consider the following 140-residue polypeptide: Gonadotropin subunit beta-2 (140 aa).

An N-terminal signal peptide occupies residues 1-23 (MSVPASSFLLLCFLMNSFSPAQS). 6 disulfides stabilise this stretch: C29/C77, C43/C92, C46/C130, C54/C108, C58/C110, and C113/C120. The N-linked (GlcNAc...) asparagine glycan is linked to N33.

It belongs to the glycoprotein hormones subunit beta family. As to quaternary structure, heterodimer of an alpha and a beta chain.

It localises to the secreted. In terms of biological role, involved in gametogenesis and steroidogenesis. In Ictalurus punctatus (Channel catfish), this protein is Gonadotropin subunit beta-2 (cgbb).